The following is a 174-amino-acid chain: Pituitary tumor-transforming gene 1 protein-interacting protein (174 aa).

The signal sequence occupies residues 1–29 (MAPANLGLTPHWVMLLGAVLLLLLSGASA). Topologically, residues 30–93 (QEPPRVGCSE…RWGVCWVNFE (64 aa)) are extracellular. The 54-residue stretch at 36–89 (GCSEYTNRSCEECLRNVSCLWCNENKACMDYPVRKILPPASLCKLSSARWGVCW) folds into the PSI domain. N-linked (GlcNAc...) asparagine glycosylation is found at N42 and N51. A helical transmembrane segment spans residues 94 to 114 (ALIITMSVLGGSVLLGITVCC). Residues 115–174 (CYCCRRKKSRKPDKSDERAMREQEERRVRQEERRAEMKSRHDEIRKKYGLFKEQNPYEKF) are Cytoplasmic-facing. The interval 125-155 (KPDKSDERAMREQEERRVRQEERRAEMKSRH) is disordered. The segment covering 126 to 155 (PDKSDERAMREQEERRVRQEERRAEMKSRH) has biased composition (basic and acidic residues). Positions 127-163 (DKSDERAMREQEERRVRQEERRAEMKSRHDEIRKKYG) form a coiled coil. A Phosphotyrosine modification is found at Y171.

In terms of assembly, interacts with PTTG1.

The protein localises to the cell membrane. The protein resides in the cytoplasm. It localises to the nucleus. May facilitate PTTG1 nuclear translocation. The polypeptide is Pituitary tumor-transforming gene 1 protein-interacting protein (Pttg1ip) (Mus musculus (Mouse)).